Here is a 161-residue protein sequence, read N- to C-terminus: SsrA-binding protein (161 aa).

The disordered stretch occupies residues 137–161 (HDKRTDSKEKDWNRDKARIMKSSLR). Basic and acidic residues predominate over residues 139 to 154 (KRTDSKEKDWNRDKAR).

The protein belongs to the SmpB family.

It is found in the cytoplasm. In terms of biological role, required for rescue of stalled ribosomes mediated by trans-translation. Binds to transfer-messenger RNA (tmRNA), required for stable association of tmRNA with ribosomes. tmRNA and SmpB together mimic tRNA shape, replacing the anticodon stem-loop with SmpB. tmRNA is encoded by the ssrA gene; the 2 termini fold to resemble tRNA(Ala) and it encodes a 'tag peptide', a short internal open reading frame. During trans-translation Ala-aminoacylated tmRNA acts like a tRNA, entering the A-site of stalled ribosomes, displacing the stalled mRNA. The ribosome then switches to translate the ORF on the tmRNA; the nascent peptide is terminated with the 'tag peptide' encoded by the tmRNA and targeted for degradation. The ribosome is freed to recommence translation, which seems to be the essential function of trans-translation. This Aliivibrio salmonicida (strain LFI1238) (Vibrio salmonicida (strain LFI1238)) protein is SsrA-binding protein.